Reading from the N-terminus, the 318-residue chain is NADH-ubiquinone oxidoreductase chain 1 (318 aa).

A run of 8 helical transmembrane segments spans residues 2–22 (FMINLLLTIVPILLAVAFLTL), 68–88 (ITMFIIAPILALTLALTMWTP), 100–120 (LGVLFMLAMSSLAVYSILWSG), 146–166 (LAIILLSVLLLSGSFALPALI), 171–191 (HMWLIIPSWPLAMMWFISTLA), 222–242 (LFFLAEYANIIMMNIFTTILF), 253–273 (ELYTINFALKATLLTISFLWV), and 294–314 (LPLTLALCMWHVTMPIITAGI).

Belongs to the complex I subunit 1 family.

Its subcellular location is the mitochondrion inner membrane. The catalysed reaction is a ubiquinone + NADH + 5 H(+)(in) = a ubiquinol + NAD(+) + 4 H(+)(out). In terms of biological role, core subunit of the mitochondrial membrane respiratory chain NADH dehydrogenase (Complex I) that is believed to belong to the minimal assembly required for catalysis. Complex I functions in the transfer of electrons from NADH to the respiratory chain. The immediate electron acceptor for the enzyme is believed to be ubiquinone. The polypeptide is NADH-ubiquinone oxidoreductase chain 1 (MT-ND1) (Coelops frithii (East Asian tailless leaf-nosed bat)).